The primary structure comprises 277 residues: 3-methyl-2-oxobutanoate hydroxymethyltransferase (277 aa).

The Mg(2+) site is built by D43 and D82. Residues 43-44, D82, and K112 each bind 3-methyl-2-oxobutanoate; that span reads DS. E114 contacts Mg(2+). E181 serves as the catalytic Proton acceptor.

Belongs to the PanB family. Homodecamer; pentamer of dimers. Mg(2+) is required as a cofactor.

It is found in the cytoplasm. The catalysed reaction is 3-methyl-2-oxobutanoate + (6R)-5,10-methylene-5,6,7,8-tetrahydrofolate + H2O = 2-dehydropantoate + (6S)-5,6,7,8-tetrahydrofolate. It participates in cofactor biosynthesis; (R)-pantothenate biosynthesis; (R)-pantoate from 3-methyl-2-oxobutanoate: step 1/2. In terms of biological role, catalyzes the reversible reaction in which hydroxymethyl group from 5,10-methylenetetrahydrofolate is transferred onto alpha-ketoisovalerate to form ketopantoate. In Exiguobacterium sp. (strain ATCC BAA-1283 / AT1b), this protein is 3-methyl-2-oxobutanoate hydroxymethyltransferase.